Reading from the N-terminus, the 148-residue chain is SsrA-binding protein (148 aa).

The span at 129 to 142 (ETEKKRDWEREKAR) shows a compositional bias: basic and acidic residues. The interval 129 to 148 (ETEKKRDWEREKARIMRAGT) is disordered.

The protein belongs to the SmpB family.

The protein localises to the cytoplasm. Its function is as follows. Required for rescue of stalled ribosomes mediated by trans-translation. Binds to transfer-messenger RNA (tmRNA), required for stable association of tmRNA with ribosomes. tmRNA and SmpB together mimic tRNA shape, replacing the anticodon stem-loop with SmpB. tmRNA is encoded by the ssrA gene; the 2 termini fold to resemble tRNA(Ala) and it encodes a 'tag peptide', a short internal open reading frame. During trans-translation Ala-aminoacylated tmRNA acts like a tRNA, entering the A-site of stalled ribosomes, displacing the stalled mRNA. The ribosome then switches to translate the ORF on the tmRNA; the nascent peptide is terminated with the 'tag peptide' encoded by the tmRNA and targeted for degradation. The ribosome is freed to recommence translation, which seems to be the essential function of trans-translation. In Burkholderia lata (strain ATCC 17760 / DSM 23089 / LMG 22485 / NCIMB 9086 / R18194 / 383), this protein is SsrA-binding protein.